A 281-amino-acid chain; its full sequence is MASARDIRRRIRGVRNMQQITKAMKMVAASKLRKAQEKVIAARPYARQLQEVLARLAQDQADVTHPLLMERPVQRVGYIIITSDRGLCGGYNTNLIRMTNSSIAEETHDVRLVAVGRKGRDFYRRGKIETIAEFVGLGDNPSYGQAKEIAQEVIGLYESGELDEVYLLYNEFVSAISQRPTRIKLLPIEKPKQVSNTEYIFEPSAEEILTTLLPKYVETQVFRTLLEGKASEMGAKMTAMGAATDNAKEAIERLTLQLNRARQAAITTEISEIVGGASALE.

It belongs to the ATPase gamma chain family. In terms of assembly, F-type ATPases have 2 components, CF(1) - the catalytic core - and CF(0) - the membrane proton channel. CF(1) has five subunits: alpha(3), beta(3), gamma(1), delta(1), epsilon(1). CF(0) has three main subunits: a, b and c.

The protein resides in the cell membrane. Functionally, produces ATP from ADP in the presence of a proton gradient across the membrane. The gamma chain is believed to be important in regulating ATPase activity and the flow of protons through the CF(0) complex. This chain is ATP synthase gamma chain, found in Desulfitobacterium hafniense (strain DSM 10664 / DCB-2).